The sequence spans 547 residues: CTP synthase (547 aa).

The amidoligase domain stretch occupies residues 1–267; the sequence is MTKFVFVTGG…AQQTLALLNL (267 aa). Serine 13 serves as a coordination point for CTP. Serine 13 lines the UTP pocket. ATP-binding positions include 14-19 and aspartate 71; that span reads SIGKGI. 2 residues coordinate Mg(2+): aspartate 71 and glutamate 141. CTP contacts are provided by residues 148–150, 188–193, and lysine 224; these read DIE and KTKPTQ. UTP-binding positions include 188–193 and lysine 224; that span reads KTKPTQ. Residues 292-534 enclose the Glutamine amidotransferase type-1 domain; sequence EIALVGKYVQ…VKAAVDHYST (243 aa). Glycine 354 contributes to the L-glutamine binding site. The Nucleophile; for glutamine hydrolysis role is filled by cysteine 381. Residues 382–385, glutamate 405, and arginine 462 each bind L-glutamine; that span reads LGMQ. Active-site residues include histidine 507 and glutamate 509.

The protein belongs to the CTP synthase family. As to quaternary structure, homotetramer.

It catalyses the reaction UTP + L-glutamine + ATP + H2O = CTP + L-glutamate + ADP + phosphate + 2 H(+). The catalysed reaction is L-glutamine + H2O = L-glutamate + NH4(+). It carries out the reaction UTP + NH4(+) + ATP = CTP + ADP + phosphate + 2 H(+). It participates in pyrimidine metabolism; CTP biosynthesis via de novo pathway; CTP from UDP: step 2/2. Allosterically activated by GTP, when glutamine is the substrate; GTP has no effect on the reaction when ammonia is the substrate. The allosteric effector GTP functions by stabilizing the protein conformation that binds the tetrahedral intermediate(s) formed during glutamine hydrolysis. Inhibited by the product CTP, via allosteric rather than competitive inhibition. In terms of biological role, catalyzes the ATP-dependent amination of UTP to CTP with either L-glutamine or ammonia as the source of nitrogen. Regulates intracellular CTP levels through interactions with the four ribonucleotide triphosphates. The sequence is that of CTP synthase from Rippkaea orientalis (strain PCC 8801 / RF-1) (Cyanothece sp. (strain PCC 8801)).